Reading from the N-terminus, the 89-residue chain is MDGIKYAVFTEKSIRLLGNNQYTSNVESGSTRTEIKHWVELFFGVKVIAMNSHRLPGKGRRMGHTMHYRRMIITLQPGYSIPPLIEKRT.

It belongs to the universal ribosomal protein uL23 family. As to quaternary structure, part of the 50S ribosomal subunit.

It localises to the plastid. The protein localises to the chloroplast. Its function is as follows. Binds to 23S rRNA. In Calycanthus floridus var. glaucus (Eastern sweetshrub), this protein is Large ribosomal subunit protein uL23cz/uL23cy (rpl23-A).